Reading from the N-terminus, the 414-residue chain is Cytochrome c biogenesis protein Ccs1 (414 aa).

A run of 3 helical transmembrane segments spans residues 14 to 34 (LTVA…GTVI), 73 to 93 (SWWF…CTIT), and 159 to 179 (VSPI…MLST).

This sequence belongs to the Ccs1/CcsB family. May interact with CcsA.

The protein resides in the plastid. Its subcellular location is the chloroplast thylakoid membrane. Functionally, required during biogenesis of c-type cytochromes (cytochrome c6 and cytochrome f) at the step of heme attachment. This is Cytochrome c biogenesis protein Ccs1 from Guillardia theta (Cryptophyte).